The sequence spans 375 residues: Growth/differentiation factor 8 (375 aa).

A signal peptide spans 1 to 18 (MQRLQICVYIYLFVLIVA). Residues 19 to 266 (GPVDLSENSE…VTDTPKRSRR (248 aa)) constitute a propeptide that is removed on maturation. N-linked (GlcNAc...) asparagine glycosylation is present at N71. 3 disulfide bridges follow: C281–C340, C309–C372, and C313–C374.

It belongs to the TGF-beta family. Homodimer; disulfide-linked. Interacts with WFIKKN2, leading to inhibit its activity. Interacts with FSTL3. Synthesized as large precursor molecule that undergoes proteolytic cleavage to generate an N-terminal propeptide and a disulfide linked C-terminal dimer, which is the biologically active molecule. The circulating form consists of a latent complex of the C-terminal dimer and other proteins, including its propeptide, which maintain the C-terminal dimer in a latent, inactive state. Ligand activation requires additional cleavage of the prodomain by a tolloid-like metalloproteinase.

Its subcellular location is the secreted. Functionally, acts specifically as a negative regulator of skeletal muscle growth. This Vulpes vulpes (Red fox) protein is Growth/differentiation factor 8 (MSTN).